A 156-amino-acid chain; its full sequence is Deoxyuridine 5'-triphosphate nucleotidohydrolase (156 aa).

Residues 76-78, asparagine 89, 93-95, and lysine 103 each bind substrate; these read RSG and TVD.

This sequence belongs to the dUTPase family. It depends on Mg(2+) as a cofactor.

The catalysed reaction is dUTP + H2O = dUMP + diphosphate + H(+). It participates in pyrimidine metabolism; dUMP biosynthesis; dUMP from dCTP (dUTP route): step 2/2. In terms of biological role, this enzyme is involved in nucleotide metabolism: it produces dUMP, the immediate precursor of thymidine nucleotides and it decreases the intracellular concentration of dUTP so that uracil cannot be incorporated into DNA. The polypeptide is Deoxyuridine 5'-triphosphate nucleotidohydrolase (Rhizobium etli (strain CIAT 652)).